The chain runs to 101 residues: uncharacterized protein (101 aa).

The chain crosses the membrane as a helical span at residues 70–90 (VLFIPIILLLPPSCPLTGVTV).

The protein resides in the membrane. This is an uncharacterized protein from Saccharomyces cerevisiae (strain ATCC 204508 / S288c) (Baker's yeast).